The sequence spans 418 residues: Ankyrin repeat and SOCS box protein 6 (418 aa).

6 ANK repeats span residues 65 to 95 (EGVSNALLKMAELGLTRAAAVLLQSGANLNF), 100 to 129 (TYYTALHIAVLRNQPDMVELLVRHGADINR), 134 to 164 (HESSPLDLASEEPERLPCLQRLLDLGADVNA), 168 to 203 (NGKTALLHALASSDGVQIHNTENIRLLLEGGADVKA), 224 to 253 (CGDKEEAPMINRFCFQVTQLLLAHGADPSE), and 258 to 287 (ESLTHICLKSFKLHFPLLCFLLESGAAYNC). An SOCS box domain is found at 358–413 (ALHASLRQLESYPPPLKHLCRVSIRLCLRPWPVDTKVKALPLPDRLKWYLLSAHSD).

Belongs to the ankyrin SOCS box (ASB) family. In terms of assembly, binds APS. Identified in a complex with ELOB and ELOC. Interacts with CUL5 and RNF7. Interacts with SQSTM1. As to expression, detected in adipocytes.

The protein localises to the cytoplasm. The protein operates within protein modification; protein ubiquitination. Functionally, probable substrate-recognition component of a SCF-like ECS (Elongin-Cullin-SOCS-box protein) E3 ubiquitin-protein ligase complex which mediates the ubiquitination and subsequent proteasomal degradation of target proteins. May play a role in the regulation of cell proliferation and autophagy by promoting the ubiquitination and degradation of SQSTM1. The sequence is that of Ankyrin repeat and SOCS box protein 6 (Asb6) from Mus musculus (Mouse).